We begin with the raw amino-acid sequence, 460 residues long: Argininosuccinate lyase (460 aa).

Belongs to the lyase 1 family. Argininosuccinate lyase subfamily.

It localises to the cytoplasm. The enzyme catalyses 2-(N(omega)-L-arginino)succinate = fumarate + L-arginine. It participates in amino-acid biosynthesis; L-arginine biosynthesis; L-arginine from L-ornithine and carbamoyl phosphate: step 3/3. In Streptococcus mutans serotype c (strain ATCC 700610 / UA159), this protein is Argininosuccinate lyase.